Consider the following 153-residue polypeptide: MAKETQLQVEAIKNGTVIDHIPAQIGIKVLKLFDMHNSSQRVTIGLNLPSSALGHKDLLKIENVFINEEQASKLALYAPHATVNQIENYEVVKKLALELPEKINNVFECPNSNCISHNEPVESSFKVFEKKEEIRLKCKYCEKVFSREIVTER.

Residues Cys109, Cys114, Cys138, and Cys141 each coordinate Zn(2+).

It belongs to the PyrI family. As to quaternary structure, contains catalytic and regulatory chains. Requires Zn(2+) as cofactor.

Its function is as follows. Involved in allosteric regulation of aspartate carbamoyltransferase. This is Aspartate carbamoyltransferase regulatory chain from Vibrio parahaemolyticus serotype O3:K6 (strain RIMD 2210633).